Here is a 618-residue protein sequence, read N- to C-terminus: UvrABC system protein C (618 aa).

A GIY-YIG domain is found at 13 to 92 (DKPGVYLMKN…IKKYRPKYNI (80 aa)). The UVR domain maps to 204-239 (LDIVENFKLNMEKAAGNLEFEKAAMLRDKINIIEKI).

Belongs to the UvrC family. As to quaternary structure, interacts with UvrB in an incision complex.

It is found in the cytoplasm. Its function is as follows. The UvrABC repair system catalyzes the recognition and processing of DNA lesions. UvrC both incises the 5' and 3' sides of the lesion. The N-terminal half is responsible for the 3' incision and the C-terminal half is responsible for the 5' incision. The sequence is that of UvrABC system protein C from Clostridium botulinum (strain 657 / Type Ba4).